The chain runs to 474 residues: Glutamate--tRNA ligase (474 aa).

A 'HIGH' region motif is present at residues 9-19; that stretch reads PSPTGYLHVGG. Positions 240–244 match the 'KMSKS' region motif; the sequence is KLSKR. Residue Lys-243 participates in ATP binding.

It belongs to the class-I aminoacyl-tRNA synthetase family. Glutamate--tRNA ligase type 1 subfamily. Monomer.

The protein localises to the cytoplasm. The enzyme catalyses tRNA(Glu) + L-glutamate + ATP = L-glutamyl-tRNA(Glu) + AMP + diphosphate. Functionally, catalyzes the attachment of glutamate to tRNA(Glu) in a two-step reaction: glutamate is first activated by ATP to form Glu-AMP and then transferred to the acceptor end of tRNA(Glu). The chain is Glutamate--tRNA ligase from Vibrio vulnificus (strain CMCP6).